The sequence spans 437 residues: Transcription factor E2F2 (437 aa).

The interval 65–105 is cyclin A/CDK2 binding; that stretch reads ATPHGPEGQVVRCLPAGRLPAKRKLDLEGIGRPVVPEFPTP. A DNA-binding region spans residues 107–196; the sequence is GKCIRVDGLP…KNNIQWVGRG (90 aa). Residues 155-176 form a leucine-zipper region; it reads LNWAAEVLDVQKRRIYDITNVL. A DEF box motif is present at residues 160–196; the sequence is EVLDVQKRRIYDITNVLEGIQLIRKKAKNNIQWVGRG. Residues 197-289 are dimerization; the sequence is MFEDPTRPGK…PDRTEDNLQI (93 aa). The tract at residues 307-368 is disordered; it reads VQEPDSPSEE…APPPPSLVPL (62 aa). The span at 315–330 shows a compositional bias: low complexity; it reads EEPLPSTSTLCPSPDS. Residues 351–365 are compositionally biased toward pro residues; sequence APAPTPQQAPPPPSL. Residues 359-437 are transactivation; the sequence is APPPPSLVPL…SYDLGDLLIN (79 aa). A retinoblastoma protein binding region spans residues 410 to 427; it reads DDYLWGLEAGEGISDLFD.

The protein belongs to the E2F/DP family. Component of the DRTF1/E2F transcription factor complex. Forms heterodimers with DP family members. The E2F2 complex binds specifically hypophosphorylated retinoblastoma protein RB1. During the cell cycle, RB1 becomes phosphorylated in mid-to-late G1 phase, detaches from the DRTF1/E2F complex, rendering E2F transcriptionally active. Viral oncoproteins, notably E1A, T-antigen and HPV E7, are capable of sequestering RB1, thus releasing the active complex. Binds EAPP. In terms of processing, phosphorylated by CDK2 and cyclin A-CDK2 in the S-phase. In terms of tissue distribution, highest level of expression is found in placenta, low levels are found in lung. Found as well in many immortalized cell lines derived from tumor samples.

Its subcellular location is the nucleus. In terms of biological role, transcription activator that binds DNA cooperatively with DP proteins through the E2 recognition site, 5'-TTTC[CG]CGC-3' found in the promoter region of a number of genes whose products are involved in cell cycle regulation or in DNA replication. The DRTF1/E2F complex functions in the control of cell-cycle progression from g1 to s phase. E2F2 binds specifically to RB1 in a cell-cycle dependent manner. The polypeptide is Transcription factor E2F2 (E2F2) (Homo sapiens (Human)).